Here is a 580-residue protein sequence, read N- to C-terminus: Mucolipin-1 (580 aa).

Residues 1 to 38 form a disordered region; that stretch reads MATPAGRRASETERLLTPNPGYGTQVGTSPAPTTPTEE. The Cytoplasmic segment spans residues 1–65; sequence MATPAGRRAS…FRAKGRKPCK (65 aa). Residue S10 is modified to Phosphoserine. The short motif at 11–16 is the Dileucine motif; mediates targeting to lysosomes element; it reads ETERLL. The segment at 42–62 is interaction with phosphoinositides; the sequence is RRRLKYFFMSPCDKFRAKGRK. A helical transmembrane segment spans residues 66–86; that stretch reads LMLQVVKILVVTVQLILFGLS. Topologically, residues 87-298 are extracellular; sequence NQLVVTFREE…VSRHGDNSFR (212 aa). The extracellular/lumenal pore loop stretch occupies residues 107–121; it reads LGYSDGSDDTFAAYT. A disulfide bond links C166 and C192. N-linked (GlcNAc...) asparagine glycans are attached at residues N220 and N230. An intrachain disulfide couples C253 to C284. Residues 299–321 traverse the membrane as a helical segment; that stretch reads LLFDVVVILTCSLSFLLCARSLL. Topologically, residues 322 to 350 are cytoplasmic; it reads RGFLLQNEFVVFMWRRRGREISLWERLEF. A helical transmembrane segment spans residues 351–371; that stretch reads VNGWYILLVTSDVLTISGTVM. Residues 372–382 lie on the Extracellular side of the membrane; the sequence is KIGIEAKNLAS. A helical membrane pass occupies residues 383-405; it reads YDVCSILLGTSTLLVWVGVIRYL. Topologically, residues 406–427 are cytoplasmic; the sequence is TFFHKYNILIATLRVALPSVMR. A helical membrane pass occupies residues 428-448; that stretch reads FCCCVAVIYLGYCFCGWIVLG. The Extracellular portion of the chain corresponds to 449–456; the sequence is PYHVKFRS. Residues 457–477 constitute an intramembrane region (pore-forming); it reads LSMVSECLFSLINGDDMFVTF. A Selectivity filter motif is present at residues 469–474; the sequence is NGDDMF. Topologically, residues 478-491 are extracellular; the sequence is AAMQAQQGHSSLVW. The helical transmembrane segment at 492 to 513 threads the bilayer; the sequence is LFSQLYLYSFISLFIYMVLSLF. The Cytoplasmic segment spans residues 514-580; sequence IALITGAYDT…SPEDHSLLVN (67 aa). S557 carries the post-translational modification Phosphoserine. S559 is modified (phosphoserine; by PAK). The segment at 565 to 567 is required for palmitoylation and association with membranes; it reads CCC. A Dileucine internalization motif; mediates AP2 complex-dependent internalization motif is present at residues 573 to 578; that stretch reads EDHSLL.

This sequence belongs to the transient receptor (TC 1.A.4) family. Polycystin subfamily. MCOLN1 sub-subfamily. As to quaternary structure, homotetramer. Homooligomer. Can heterooligomerize with MCOLN2 or MCOLN3; heteromeric assemblies have different channel properties as compared to the respective homooligomers and may be tissue-specific. Interacts with PDCD6. Interacts with TMEM163. Interacts with LAPTM4B. Palmitoylated; involved in association with membranes. In terms of processing, phosphorylation by PKA inhibits channel activity. Dephosphorylation increases activity. Post-translationally, proteolytically cleaved probably involving multiple lysosomal proteases including cathepsin B; inhibits lysosomal channel activity. Widely expressed, with the highest expression in brain, liver and kidney.

It is found in the late endosome membrane. It localises to the lysosome membrane. The protein localises to the cytoplasmic vesicle membrane. Its subcellular location is the cell projection. The protein resides in the phagocytic cup. It is found in the cytoplasmic vesicle. It localises to the phagosome membrane. The protein localises to the cell membrane. It carries out the reaction Ca(2+)(in) = Ca(2+)(out). The enzyme catalyses Fe(2+)(in) = Fe(2+)(out). It catalyses the reaction Mg(2+)(in) = Mg(2+)(out). The catalysed reaction is K(+)(in) = K(+)(out). It carries out the reaction Na(+)(in) = Na(+)(out). With respect to regulation, channel activity is controlled by multiple regulatory mechanisms in different subcellular compartments. Lower pH by itself has an inhibitory effect on channel conductance. Channel function is transiently modulated by changes in Ca(2+) in a pH-dependent manner; pH changes modify the aggregation state of unitary channels; a negative cooperativity between extracellular/lumenal Ca(2+) and H(+) is suggested. Fe(2+) channel activity is potentiated by low pH. Regulated by phosphoinositides in a compartment-specific manner: in lysosomes activated by PtdIns(3,5)P2 (Phosphatidylinositol 3,5-bisphosphate) and at the plasma membrane inhibited by PtdIns(4,5)P2 (Phosphatidylinositol 4,5-bisphosphate). Its function is as follows. Nonselective cation channel probably playing a role in the regulation of membrane trafficking events and of metal homeostasis. Acts as a Ca(2+)-permeable cation channel with inwardly rectifying activity. Proposed to play a major role in Ca(2+) release from late endosome and lysosome vesicles to the cytoplasm, which is important for many lysosome-dependent cellular events, including the fusion and trafficking of these organelles, exocytosis and autophagy. Required for efficient uptake of large particles in macrophages in which Ca(2+) release from the lysosomes triggers lysosomal exocytosis. May also play a role in phagosome-lysosome fusion. Involved in lactosylceramide trafficking indicative for a role in the regulation of late endocytic membrane fusion/fission events. By mediating lysosomal Ca(2+) release is involved in regulation of mTORC1 signaling and in mTOR/TFEB-dependent lysosomal adaptation to environmental cues such as nutrient levels. Seems to act as lysosomal active oxygen species (ROS) sensor involved in ROS-induced TFEB activation and autophagy. Also functions as a Fe(2+) permeable channel in late endosomes and lysosomes. Also permeable to Mg(2+), Na(+). K(+) and Cs(+). Proposed to play a role in zinc homeostasis probably implicating its association with TMEM163. In adaptive immunity, TRPML2 and TRPML1 may play redundant roles in the function of the specialized lysosomes of B cells. May contribute to cellular lipase activity within the late endosomal pathway or at the cell surface which may be involved in processes of membrane reshaping and vesiculation, especially the growth of tubular structures. However, it is not known, whether it conveys the enzymatic activity directly, or merely facilitates the activity of an associated phospholipase. This chain is Mucolipin-1, found in Mus musculus (Mouse).